The following is a 142-amino-acid chain: MVLSAADKNNVKTTWDKIGGHAAEYVAEGLTRMFTSFPTTKTYFHHIDVSPGSGDIKAHGKKVADALTTAVGHLDDLPTALSTLSDVHAHKLRVDPVNFKFLNHCLLVTLAAHLGADFTPSIHASLDKFFASVSTVLTSKYR.

The 141-residue stretch at 2–142 folds into the Globin domain; it reads VLSAADKNNV…VSTVLTSKYR (141 aa). Position 4 is a phosphoserine (Ser4). N6-succinyllysine is present on residues Lys8 and Lys12. Residue Lys17 is modified to N6-acetyllysine; alternate. N6-succinyllysine; alternate is present on Lys17. Tyr25 carries the post-translational modification Phosphotyrosine. Ser36 bears the Phosphoserine mark. Residue Lys41 is modified to N6-succinyllysine. Ser50 is modified (phosphoserine). O2 is bound at residue His59. His88 provides a ligand contact to heme b. Residue Thr109 is modified to Phosphothreonine. Ser125 and Ser132 each carry phosphoserine. Residues Thr135 and Thr138 each carry the phosphothreonine modification. A Phosphoserine modification is found at Ser139.

The protein belongs to the globin family. In terms of assembly, heterotetramer of two alpha chains and two beta chains. As to expression, red blood cells.

Its function is as follows. Involved in oxygen transport from the lung to the various peripheral tissues. Functionally, hemopressin acts as an antagonist peptide of the cannabinoid receptor CNR1. Hemopressin-binding efficiently blocks cannabinoid receptor CNR1 and subsequent signaling. The polypeptide is Hemoglobin subunit alpha (HBA) (Cavia porcellus (Guinea pig)).